A 475-amino-acid polypeptide reads, in one-letter code: Bifunctional protein HldE (475 aa).

The interval 1 to 321 (MADKIDISLY…RALHQITASH (321 aa)) is ribokinase. 197–200 (NLKE) serves as a coordination point for ATP. Residue D266 is part of the active site. The segment at 346–475 (MTNGCFDILH…TSRLVEKMLN (130 aa)) is cytidylyltransferase.

In the N-terminal section; belongs to the carbohydrate kinase PfkB family. It in the C-terminal section; belongs to the cytidylyltransferase family. In terms of assembly, homodimer.

The catalysed reaction is D-glycero-beta-D-manno-heptose 7-phosphate + ATP = D-glycero-beta-D-manno-heptose 1,7-bisphosphate + ADP + H(+). It carries out the reaction D-glycero-beta-D-manno-heptose 1-phosphate + ATP + H(+) = ADP-D-glycero-beta-D-manno-heptose + diphosphate. It participates in nucleotide-sugar biosynthesis; ADP-L-glycero-beta-D-manno-heptose biosynthesis; ADP-L-glycero-beta-D-manno-heptose from D-glycero-beta-D-manno-heptose 7-phosphate: step 1/4. It functions in the pathway nucleotide-sugar biosynthesis; ADP-L-glycero-beta-D-manno-heptose biosynthesis; ADP-L-glycero-beta-D-manno-heptose from D-glycero-beta-D-manno-heptose 7-phosphate: step 3/4. Functionally, catalyzes the phosphorylation of D-glycero-D-manno-heptose 7-phosphate at the C-1 position to selectively form D-glycero-beta-D-manno-heptose-1,7-bisphosphate. In terms of biological role, catalyzes the ADP transfer from ATP to D-glycero-beta-D-manno-heptose 1-phosphate, yielding ADP-D-glycero-beta-D-manno-heptose. The protein is Bifunctional protein HldE of Coxiella burnetii (strain Dugway 5J108-111).